Reading from the N-terminus, the 403-residue chain is Sex hormone-binding globulin (403 aa).

An N-terminal signal peptide occupies residues 1 to 30 (MEKGEVASLRCRLLLLLLLLTLPPTHQGRT). Laminin G-like domains lie at 46–218 (KYLS…LGNC) and 225–391 (GLFF…THSC). Cys-194 and Cys-218 form a disulfide bridge. The N-linked (GlcNAc...) asparagine glycan is linked to Asn-274. A disulfide bond links Cys-363 and Cys-391. The N-linked (GlcNAc...) asparagine glycan is linked to Asn-397.

In terms of assembly, homodimer. Isoform 2 is only expressed in the liver.

The protein resides in the secreted. In terms of biological role, functions as an androgen transport protein, but may also be involved in receptor mediated processes. Each dimer binds one molecule of steroid. Specific for 5-alpha-dihydrotestosterone, testosterone, and 17-beta-estradiol. Regulates the plasma metabolic clearance rate of steroid hormones by controlling their plasma concentration. This chain is Sex hormone-binding globulin (Shbg), found in Rattus norvegicus (Rat).